Consider the following 198-residue polypeptide: Superoxide dismutase [Mn], mitochondrial (198 aa).

H26 provides a ligand contact to Mn(2+). Y34 bears the 3'-nitrotyrosine mark. Residues K44 and K51 each carry the N6-acetyllysine; alternate modification. An N6-succinyllysine; alternate mark is found at K44 and K51. H74 is a binding site for Mn(2+). K90 bears the N6-acetyllysine mark. N6-acetyllysine; alternate occurs at positions 98 and 106. N6-succinyllysine; alternate is present on residues K98 and K106. The Mn(2+) site is built by D159 and H163. Position 178 is an N6-acetyllysine (K178).

The protein belongs to the iron/manganese superoxide dismutase family. Homotetramer. The cofactor is Mn(2+). In terms of processing, nitrated under oxidative stress. Nitration coupled with oxidation inhibits the catalytic activity. Post-translationally, acetylation at Lys-98 decreases enzymatic activity. Deacetylated by SIRT3 upon exposure to ionizing radiations or after long fasting. Polyubiquitinated; leading to proteasomal degradation. Deubiquitinated by USP36 which increases protein stability.

The protein resides in the mitochondrion matrix. It catalyses the reaction 2 superoxide + 2 H(+) = H2O2 + O2. In terms of biological role, destroys superoxide anion radicals which are normally produced within the cells and which are toxic to biological systems. The protein is Superoxide dismutase [Mn], mitochondrial (SOD2) of Hylobates lar (Lar gibbon).